Consider the following 552-residue polypeptide: Cytochrome P450 monooxyhenase eriI (552 aa).

The helical transmembrane segment at 9–26 (FALKASAAVAVLLLAAWV) threads the bilayer. 2 N-linked (GlcNAc...) asparagine glycosylation sites follow: Asn-50 and Asn-447. Cys-495 contacts heme.

This sequence belongs to the cytochrome P450 family. It depends on heme as a cofactor.

It is found in the membrane. The enzyme catalyses (-)-cyatha-3,12-diene + reduced [NADPH--hemoprotein reductase] + O2 = erinacol + oxidized [NADPH--hemoprotein reductase] + H2O + H(+). It participates in secondary metabolite biosynthesis. Cytochrome P450 monooxygenase; part of the gene cluster that mediates the biosynthesis of erinacines, cyathane-xylosides that show unique biological activities, including leishmanicidal activity, stimulating activity for nerve growth-factor synthesis, and agonistic activity toward the kappa opioid receptor. Within the pathway, eriI hydroxylates cyatha-3,12-diene at C-14 of the seven-membered ring to yield erinacol. The first step of the erinacines biosynthesis pathway is catalyzed by the geranylgeranyl diphosphate (GGPP) synthase eriE via conversion of farnesyl pyrophosphate and isopentyl pyrophosphate into geranylgeranyl pyrophosphate (GGPP). GGPP is then substrate of the diterpene cyclase eriG for the production of cyatha-3,12-diene. The cytochrome P450 monooxygenase eriI then hydroxylates cyatha-3,12-diene at C-14 of the seven-membered ring to produce erinacol, which is further hydroxylated at C-15 by the cytochrome P450 monooxygenase eriC to yield cyathadiol. The cytochrome P450 monooxygenase eriA then catalyzes C-11 hydroxylation in the presence of the short chain dehydrogenase/reductase (SDR) eriH, which leads to the production of cyathatriol. The acetyltransferase eriL converts cyathatriol into 11-O-acetyl-cyathatriol. The SDR eriH catalyzes further oxidation of 11-O-acetyl-cyathatriol into 1-O-acetylcyathin A3. Finally, the glycosyl transferase eriJ tranfers xylose from UDP-xylose onto C-14 of 11-O-acetyl-cyathatriol to form eracine Q. EriJ is also able to convert 11-O-acetyl-cyathatriol to eracine Q2 by using UDP-D-glucose as cosubstrate, but at a lower rate. In terms of biological role, cytochrome P450 monooxygenase; part of the gene cluster that mediates the biosynthesis of erinacines, cyathane-xylosides that show unique biological activities, including leishmanicidal activity, stimulating activity for nerve growth-factor synthesis, and agonistic activity toward the kappa opioid receptor. The geranylgeranyl diphosphate (GGPP) synthase eriE catalyzes the first step in erinacines biosynthesis via conversion of farnesyl pyrophosphate and isopentyl pyrophosphate into geranylgeranyl pyrophosphate (GGPP). GGPP is then substrate of the diterpene cyclase eriG for the production of cyatha-3,12-diene. EriG is unable to use geranyl diphosphate (GPP) or farnesyl diphosphate (FPP) as substrates. The cytochrome P450 monooxygenase eriI then hydroxylates cyatha-3,12-diene at C-14 of the seven-membered ring to produce erinacol, which is further hydroxylated at C-15 by the cytochrome P450 monooxygenase eriC to yield cyathadiol. The cytochrome P450 monooxygenase eriA then catalyzes C-11 hydroxylation in the presence of the short chain dehydrogenase/reductase (SDR) eriH, which leads to the production of cyathatriol. The acetyltransferase eriL converts cyathatriol into 11-O-acetyl-cyathatriol. The SDR eriH catalyzes further oxidation of 11-O-acetyl-cyathatriol into 1-O-acetylcyathin A3. Finally, the glycosyl transferase eriJ tranfers xylose from UDP-xylose onto C-14 of 11-O-acetyl-cyathatriol to form eracine Q. EriJ is also able to convert 11-O-acetyl-cyathatriol to eracine Q2 by using UDP-D-glucose as cosubstrate, but at a lower rate. In the absence of eriL and eriJ, the SDR eriH is able to convert cyathatriol to cyathin A3; this is likely a switching mechanism in the biosynthesis of cyathins (C-14 ketogroup)and erinacines (C-14 glycosylated group). The roles of the SDR eriB, the polyprenyl transferase eriF and the dehydrogenase eriK have still to be identified. The polypeptide is Cytochrome P450 monooxyhenase eriI (Hericium erinaceus (Lion's mane mushroom)).